The primary structure comprises 528 residues: Negative elongation factor A (528 aa).

Residues 89 to 248 (WVLMVADILK…TPIPPSRTLL (160 aa)) form the HDAg domain. The tract at residues 125 to 188 (REKVGECEAS…LQKSTETAQQ (64 aa)) is NELF-C/D-binding. Position 157 is a phosphothreonine (Thr157). An RNAPII-binding region spans residues 189 to 248 (LKRSAGVPFHAKGRGLLRKMDTTTPLKGIPKQAPFRSPTAPSVFSPTGNRTPIPPSRTLL). The tract at residues 215–245 (KGIPKQAPFRSPTAPSVFSPTGNRTPIPPSR) is disordered. Phosphoserine occurs at positions 225 and 233. Residues 227–238 (TAPSVFSPTGNR) are compositionally biased toward polar residues. At Thr277 the chain carries Phosphothreonine. Over residues 320–341 (PSTSYLPSTPSVVPASSYIPSS) the composition is skewed to low complexity. The disordered stretch occupies residues 320 to 409 (PSTSYLPSTP…PPAVAPTTQT (90 aa)). Ser363 carries the phosphoserine modification.

This sequence belongs to the NELF-A family. The NELF complex is composed of NELFA, NELFB, NELFCD (isoform NELF-C or isoform NELF-D) and NELFE; NELFA and NELFCD form a stable subcomplex that binds to the N-terminus of NELFB. In vitro, the NELFA:NELFCD subcomplex binds to ssDNA and ssRNA in a sequence- and structure-dependent manner. Interacts with the RNA polymerase II complex when it is not phosphorylated by P-TEFb. As to expression, ubiquitous. Expressed in heart, brain, placenta, liver, skeletal muscle, kidney and pancreas. Expressed at lower level in adult lung. Expressed in fetal brain, lung, liver and kidney.

It is found in the nucleus. Its function is as follows. Essential component of the NELF complex, a complex that negatively regulates the elongation of transcription by RNA polymerase II. The NELF complex, which acts via an association with the DSIF complex and causes transcriptional pausing, is counteracted by the P-TEFb kinase complex. (Microbial infection) The NELF complex is involved in HIV-1 latency possibly involving recruitment of PCF11 to paused RNA polymerase II. The polypeptide is Negative elongation factor A (NELFA) (Homo sapiens (Human)).